The chain runs to 301 residues: 2-methylisocitrate lyase (301 aa).

Residue 53–55 (SGA) participates in substrate binding. Residues Asp92 and Asp94 each coordinate Mg(2+). Residues 129 to 130 (CG), Arg162, Glu192, 214 to 216 (NMT), Arg245, and Arg274 contribute to the substrate site.

Belongs to the isocitrate lyase/PEP mutase superfamily. Methylisocitrate lyase family. Mg(2+) is required as a cofactor.

The catalysed reaction is 3-hydroxybutane-1,2,3-tricarboxylate = pyruvate + succinate. Involved in the methylcitric acid cycle. Catalyzes the cleavage of 2-methylisocitrate to yield pyruvate and succinate. This chain is 2-methylisocitrate lyase, found in Bacillus subtilis (strain 168).